The following is a 285-amino-acid chain: 4-diphosphocytidyl-2-C-methyl-D-erythritol kinase (285 aa).

Lys-11 is a catalytic residue. 95 to 105 (PVAAGIGGGSA) provides a ligand contact to ATP. Asp-137 is an active-site residue.

It belongs to the GHMP kinase family. IspE subfamily.

It carries out the reaction 4-CDP-2-C-methyl-D-erythritol + ATP = 4-CDP-2-C-methyl-D-erythritol 2-phosphate + ADP + H(+). Its pathway is isoprenoid biosynthesis; isopentenyl diphosphate biosynthesis via DXP pathway; isopentenyl diphosphate from 1-deoxy-D-xylulose 5-phosphate: step 3/6. Catalyzes the phosphorylation of the position 2 hydroxy group of 4-diphosphocytidyl-2C-methyl-D-erythritol. The chain is 4-diphosphocytidyl-2-C-methyl-D-erythritol kinase from Paramagnetospirillum magneticum (strain ATCC 700264 / AMB-1) (Magnetospirillum magneticum).